Reading from the N-terminus, the 418-residue chain is D-amino acid dehydrogenase (418 aa).

3–17 (VLILGSGVVGVATAY) serves as a coordination point for FAD.

Belongs to the DadA oxidoreductase family. FAD is required as a cofactor.

The catalysed reaction is a D-alpha-amino acid + A + H2O = a 2-oxocarboxylate + AH2 + NH4(+). The protein operates within amino-acid degradation; D-alanine degradation; NH(3) and pyruvate from D-alanine: step 1/1. Oxidative deamination of D-amino acids. This is D-amino acid dehydrogenase from Granulibacter bethesdensis (strain ATCC BAA-1260 / CGDNIH1).